The primary structure comprises 141 residues: N,N-dimethylformamidase alpha subunit (141 aa).

Heterotetramer of two DmfA1 (alpha) and two DmfA2 (beta) subunits.

It catalyses the reaction N,N-dimethylformamide + H2O = dimethylamine + formate. Functionally, hydrolyzes N,N-dimethylformamide, and to a lesser extent N,N-dimethylacetamide and N,N-diethylacetamide. Has no activity against the substituted amides N-methylformamide, N-ethylformamide, N-ethylformamide and N-methylacetamide or the unsubstituted amides formamide, nicotinamide, acetoamide, benzamide, acetamide and acrylamide. The chain is N,N-dimethylformamidase alpha subunit from Paracoccus aminophilus.